We begin with the raw amino-acid sequence, 153 residues long: uncharacterized protein (153 aa).

The N-terminal stretch at M1–A18 is a signal peptide. 2 N-linked (GlcNAc...) asparagine glycosylation sites follow: N19 and N25. The Extracellular segment spans residues N19–T43. The chain crosses the membrane as a helical span at residues L44–F64. Residues H65–S153 are Cytoplasmic-facing. The disordered stretch occupies residues K75–Q115. The span at E77–H96 shows a compositional bias: basic and acidic residues.

It is found in the membrane. This is an uncharacterized protein from Xenopus tropicalis (Western clawed frog).